We begin with the raw amino-acid sequence, 132 residues long: Small ribosomal subunit protein uS8 (132 aa).

This sequence belongs to the universal ribosomal protein uS8 family. As to quaternary structure, part of the 30S ribosomal subunit. Contacts proteins S5 and S12.

In terms of biological role, one of the primary rRNA binding proteins, it binds directly to 16S rRNA central domain where it helps coordinate assembly of the platform of the 30S subunit. The protein is Small ribosomal subunit protein uS8 of Streptomyces griseus subsp. griseus (strain JCM 4626 / CBS 651.72 / NBRC 13350 / KCC S-0626 / ISP 5235).